Consider the following 577-residue polypeptide: Dihydroxy-acid dehydratase (577 aa).

Positions 1–10 (MLKRSFDKSK) are enriched in basic and acidic residues. Positions 1–22 (MLKRSFDKSKLPSRHVTEGPSR) are disordered. C56 provides a ligand contact to [2Fe-2S] cluster. Residue D88 coordinates Mg(2+). C129 contacts [2Fe-2S] cluster. Positions 130 and 131 each coordinate Mg(2+). K131 is modified (N6-carboxylysine). Residue C201 coordinates [2Fe-2S] cluster. E453 is a binding site for Mg(2+). S479 functions as the Proton acceptor in the catalytic mechanism.

Belongs to the IlvD/Edd family. In terms of assembly, homodimer. Requires [2Fe-2S] cluster as cofactor. Mg(2+) serves as cofactor.

The enzyme catalyses (2R)-2,3-dihydroxy-3-methylbutanoate = 3-methyl-2-oxobutanoate + H2O. The catalysed reaction is (2R,3R)-2,3-dihydroxy-3-methylpentanoate = (S)-3-methyl-2-oxopentanoate + H2O. Its pathway is amino-acid biosynthesis; L-isoleucine biosynthesis; L-isoleucine from 2-oxobutanoate: step 3/4. The protein operates within amino-acid biosynthesis; L-valine biosynthesis; L-valine from pyruvate: step 3/4. Functionally, functions in the biosynthesis of branched-chain amino acids. Catalyzes the dehydration of (2R,3R)-2,3-dihydroxy-3-methylpentanoate (2,3-dihydroxy-3-methylvalerate) into 2-oxo-3-methylpentanoate (2-oxo-3-methylvalerate) and of (2R)-2,3-dihydroxy-3-methylbutanoate (2,3-dihydroxyisovalerate) into 2-oxo-3-methylbutanoate (2-oxoisovalerate), the penultimate precursor to L-isoleucine and L-valine, respectively. The sequence is that of Dihydroxy-acid dehydratase from Dinoroseobacter shibae (strain DSM 16493 / NCIMB 14021 / DFL 12).